The primary structure comprises 559 residues: Arginine--tRNA ligase (559 aa).

A 'HIGH' region motif is present at residues 116 to 126 (ANPNGPLHVGH).

The protein belongs to the class-I aminoacyl-tRNA synthetase family.

The protein resides in the cytoplasm. The enzyme catalyses tRNA(Arg) + L-arginine + ATP = L-arginyl-tRNA(Arg) + AMP + diphosphate. The protein is Arginine--tRNA ligase of Methanosphaerula palustris (strain ATCC BAA-1556 / DSM 19958 / E1-9c).